The following is a 305-amino-acid chain: Aquaporin-1 (305 aa).

A disordered region spans residues 1 to 34 (MSSNDSNDTDKQHTRLDPTGVDDAYIPPEQPETK). At 1–48 (MSSNDSNDTDKQHTRLDPTGVDDAYIPPEQPETKHHRFKISRDTLRDH) the chain is on the cytoplasmic side. Residues 49–69 (FIAAVGEFCGTFMFLWCAYVI) traverse the membrane as a helical segment. The Extracellular segment spans residues 70 to 91 (CNVANHDVALVAAPDGSHPGQL). A helical transmembrane segment spans residues 92–112 (IMIAIGFGFSVMFSIWCFAGV). Residues 113–136 (SGGALNPAMSLSLCLARAVSPTRC) lie on the Cytoplasmic side of the membrane. The short motif at 118–120 (NPA) is the NPA 1 element. The helical transmembrane segment at 137–157 (VVMWVSQIVAGMAAGGAASAM) threads the bilayer. Topologically, residues 158 to 176 (TPGEVLFANSLGLGCSRTR) are extracellular. Residues 177–197 (GLFLEMFGTAILCLTVLMTAV) form a helical membrane-spanning segment. Residues 198–203 (EKRETN) lie on the Cytoplasmic side of the membrane. The chain crosses the membrane as a helical span at residues 204–224 (FMAALPIGISLFIAHVALTAY). Residues 225-248 (TGTGVNPARSLGAAVAARYFPHYH) lie on the Extracellular side of the membrane. The short motif at 230–232 (NPA) is the NPA 2 element. Residues 249–269 (WIYWIGTLLGSILAWSVWQLL) traverse the membrane as a helical segment. Over 270 to 305 (QILDYTTYVTAEKAASTKEKAQKKGETSSSSAVAEV) the chain is Cytoplasmic. Positions 286 to 295 (TKEKAQKKGE) are enriched in basic and acidic residues. Residues 286 to 305 (TKEKAQKKGETSSSSAVAEV) form a disordered region. A compositionally biased stretch (polar residues) spans 296-305 (TSSSSAVAEV).

It belongs to the MIP/aquaporin (TC 1.A.8) family.

Its subcellular location is the endoplasmic reticulum membrane. The protein resides in the cell membrane. Water channel required to facilitate the transport of water across membranes. Involved in sporulation, freeze tolerance and osmotolerance. Is non-functional in most laboratory strains. In Saccharomyces cerevisiae (strain ATCC 204508 / S288c) (Baker's yeast), this protein is Aquaporin-1 (AQY1).